Consider the following 174-residue polypeptide: Pituitary tumor-transforming gene 1 protein-interacting protein (174 aa).

An N-terminal signal peptide occupies residues 1–29; that stretch reads MASAVLGLTLRWVMFLSAVLLLLLPGASA. The Extracellular portion of the chain corresponds to 30 to 93; the sequence is QEPPGVGCSE…RWGVCWVNFE (64 aa). The PSI domain occupies 36–89; it reads GCSEYTNRSCEECLRNVSCLWCNENKACLDYPVRKILPPASLCKLSSARWGVCW. N-linked (GlcNAc...) asparagine glycans are attached at residues N42 and N51. The chain crosses the membrane as a helical span at residues 94 to 114; the sequence is ALIITMSVLGGSVLLGITVCC. The Cytoplasmic portion of the chain corresponds to 115–174; that stretch reads CCCCRRKRSRKPDKSDERAMREQEERRVRQEERRAEMKSRHDEIRKKYGLFKEQNPYEKF. The disordered stretch occupies residues 126–155; sequence PDKSDERAMREQEERRVRQEERRAEMKSRH. A coiled-coil region spans residues 127–163; the sequence is DKSDERAMREQEERRVRQEERRAEMKSRHDEIRKKYG. At Y171 the chain carries Phosphotyrosine.

Interacts with PTTG1.

Its subcellular location is the cell membrane. The protein localises to the cytoplasm. It localises to the nucleus. May facilitate PTTG1 nuclear translocation. This Rattus norvegicus (Rat) protein is Pituitary tumor-transforming gene 1 protein-interacting protein (Pttg1ip).